The primary structure comprises 165 residues: SsrA-binding protein (165 aa).

Residues 1 to 10 (MSKKGKKKSK) show a composition bias toward basic residues. The interval 1-21 (MSKKGKKKSKNNSSVDGNRRL) is disordered.

The protein belongs to the SmpB family.

The protein resides in the cytoplasm. Its function is as follows. Required for rescue of stalled ribosomes mediated by trans-translation. Binds to transfer-messenger RNA (tmRNA), required for stable association of tmRNA with ribosomes. tmRNA and SmpB together mimic tRNA shape, replacing the anticodon stem-loop with SmpB. tmRNA is encoded by the ssrA gene; the 2 termini fold to resemble tRNA(Ala) and it encodes a 'tag peptide', a short internal open reading frame. During trans-translation Ala-aminoacylated tmRNA acts like a tRNA, entering the A-site of stalled ribosomes, displacing the stalled mRNA. The ribosome then switches to translate the ORF on the tmRNA; the nascent peptide is terminated with the 'tag peptide' encoded by the tmRNA and targeted for degradation. The ribosome is freed to recommence translation, which seems to be the essential function of trans-translation. The protein is SsrA-binding protein of Prochlorococcus marinus (strain NATL1A).